The sequence spans 624 residues: Phosphoenolpyruvate carboxykinase [GTP] (624 aa).

Substrate contacts are provided by residues Arg-88 and 222 to 224 (YGG). Mn(2+) is bound by residues Lys-231 and His-250. Residue Ser-272 coordinates substrate. Residue 273 to 278 (MCGKTS) participates in GTP binding. Cys-274 is an active-site residue. Asp-291 lines the Mn(2+) pocket. 386-388 (NAR) lines the substrate pocket. The GTP site is built by Arg-388 and Arg-420.

Belongs to the phosphoenolpyruvate carboxykinase [GTP] family. Requires Mn(2+) as cofactor.

The protein resides in the cytoplasm. The catalysed reaction is oxaloacetate + GTP = phosphoenolpyruvate + GDP + CO2. It participates in carbohydrate biosynthesis; gluconeogenesis. Its function is as follows. Catalyzes the conversion of oxaloacetate (OAA) to phosphoenolpyruvate (PEP), the rate-limiting step in the metabolic pathway that produces glucose from lactate and other precursors derived from the citric acid cycle. This chain is Phosphoenolpyruvate carboxykinase [GTP], found in Pyrococcus furiosus (strain ATCC 43587 / DSM 3638 / JCM 8422 / Vc1).